We begin with the raw amino-acid sequence, 301 residues long: Phosducin-like protein (301 aa).

Thr2 is subject to N-acetylthreonine. The segment at 15–53 (YYYSSSEEEDSDHEDKDRGRGALAGSSMPADADLAGEGI) is disordered. Residues Ser20, Ser25, Ser226, Ser293, and Ser296 each carry the phosphoserine modification. Residues 37–299 (LAGSSMPADA…TCHSEDSDLE (263 aa)) form the Phosducin domain. Residues 158 to 301 (FKQVFEIPSG…HSEDSDLEID (144 aa)) form a thioredoxin fold region.

It belongs to the phosducin family. Forms a complex with the beta and gamma subunits of the GTP-binding protein, transducin. Interacts with the CCT chaperonin complex.

The protein localises to the cell projection. The protein resides in the cilium. Functions as a co-chaperone for CCT in the assembly of heterotrimeric G protein complexes, facilitates the assembly of both Gbeta-Ggamma and RGS-Gbeta5 heterodimers. Also acts as a positive regulator of hedgehog signaling and regulates ciliary function. The chain is Phosducin-like protein (PDCL) from Bos taurus (Bovine).